Reading from the N-terminus, the 407-residue chain is Arginine deiminase (407 aa).

Residue Cys-397 is the Amidino-cysteine intermediate of the active site.

The protein belongs to the arginine deiminase family.

The protein resides in the cytoplasm. It carries out the reaction L-arginine + H2O = L-citrulline + NH4(+). Its pathway is amino-acid degradation; L-arginine degradation via ADI pathway; carbamoyl phosphate from L-arginine: step 1/2. The protein is Arginine deiminase of Vibrio parahaemolyticus serotype O3:K6 (strain RIMD 2210633).